Here is a 145-residue protein sequence, read N- to C-terminus: Mini-ribonuclease 3 (145 aa).

D27 is a catalytic residue.

It belongs to the MrnC RNase family. Homodimer. The cofactor is Mg(2+).

It is found in the cytoplasm. Involved in correct processing of both the 5' and 3' ends of 23S rRNA precursor. Processes 30S rRNA precursor transcript even in absence of ribonuclease 3 (Rnc); Rnc processes 30S rRNA into smaller rRNA precursors. This is Mini-ribonuclease 3 from Kosmotoga olearia (strain ATCC BAA-1733 / DSM 21960 / TBF 19.5.1).